The following is a 459-amino-acid chain: Glutamate--tRNA ligase 2 (459 aa).

A 'HIGH' region motif is present at residues proline 8–asparagine 18. A 'KMSKS' region motif is present at residues glycine 249–arginine 253. ATP is bound at residue lysine 252.

Belongs to the class-I aminoacyl-tRNA synthetase family. Glutamate--tRNA ligase type 1 subfamily. Monomer.

It is found in the cytoplasm. The catalysed reaction is tRNA(Glu) + L-glutamate + ATP = L-glutamyl-tRNA(Glu) + AMP + diphosphate. Functionally, catalyzes the attachment of glutamate to tRNA(Glu) in a two-step reaction: glutamate is first activated by ATP to form Glu-AMP and then transferred to the acceptor end of tRNA(Glu). In Bartonella henselae (strain ATCC 49882 / DSM 28221 / CCUG 30454 / Houston 1) (Rochalimaea henselae), this protein is Glutamate--tRNA ligase 2.